A 432-amino-acid polypeptide reads, in one-letter code: MGNNVVVLGTQWGDEGKGKIVDLLTERAKYVVRYQGGHNAGHTLVINGEKTVLHLIPSGILRENVTSIIGNGVVLSPAALMKEMKELEDRGIPVRERLLLSEACPLILDYHVALDNAREKARGAKAIGTTGRGIGPAYEDKVARRGLRVGDLFDKETFAEKLKEVMEYHNFQLVNYYKAEAVDYQKVLDDTMAVADILTSMVVDVSDLLDQARQRGDFVMFEGAQGTLLDIDHGTYPYVTSSNTTAGGVATGSGLGPRYVDYVLGILKAYSTRVGAGPFPTELFDETGEFLCKQGNEFGATTGRRRRTGWLDTVAVRRAVQLNSLSGFCLTKLDVLDGLKEVKLCVAYRMPDGREVATTPLAADDWKGVEPIYETMPGWSESTFGVKDRSGLPQAALNYIKRIEELTGVPIDIISTGPDRTETMILRDPFDA.

GTP contacts are provided by residues 13 to 19 and 41 to 43; these read GDEGKGK and GHT. Asp-14 acts as the Proton acceptor in catalysis. Residues Asp-14 and Gly-41 each coordinate Mg(2+). IMP is bound by residues 14-17, 39-42, Thr-130, Arg-144, Gln-225, Thr-240, and Arg-304; these read DEGK and NAGH. His-42 serves as the catalytic Proton donor. 300 to 306 serves as a coordination point for substrate; that stretch reads ATTGRRR. Residues Arg-306, 332–334, and 415–417 contribute to the GTP site; these read KLD and STG.

This sequence belongs to the adenylosuccinate synthetase family. As to quaternary structure, homodimer. Mg(2+) serves as cofactor.

It is found in the cytoplasm. It catalyses the reaction IMP + L-aspartate + GTP = N(6)-(1,2-dicarboxyethyl)-AMP + GDP + phosphate + 2 H(+). The protein operates within purine metabolism; AMP biosynthesis via de novo pathway; AMP from IMP: step 1/2. Its function is as follows. Plays an important role in the de novo pathway of purine nucleotide biosynthesis. Catalyzes the first committed step in the biosynthesis of AMP from IMP. This chain is Adenylosuccinate synthetase, found in Shigella sonnei (strain Ss046).